Consider the following 501-residue polypeptide: Glycerol kinase (501 aa).

Threonine 16 lines the ADP pocket. Residues threonine 16, threonine 17, and serine 18 each coordinate ATP. Threonine 16 contacts sn-glycerol 3-phosphate. Arginine 20 is an ADP binding site. Sn-glycerol 3-phosphate contacts are provided by arginine 84, glutamate 85, tyrosine 135, and aspartate 242. The glycerol site is built by arginine 84, glutamate 85, tyrosine 135, aspartate 242, and glutamine 243. The ADP site is built by threonine 264 and glycine 307. ATP is bound by residues threonine 264, glycine 307, glutamine 311, and glycine 408. Glycine 408 provides a ligand contact to ADP.

This sequence belongs to the FGGY kinase family.

The catalysed reaction is glycerol + ATP = sn-glycerol 3-phosphate + ADP + H(+). It participates in polyol metabolism; glycerol degradation via glycerol kinase pathway; sn-glycerol 3-phosphate from glycerol: step 1/1. In terms of biological role, key enzyme in the regulation of glycerol uptake and metabolism. Catalyzes the phosphorylation of glycerol to yield sn-glycerol 3-phosphate. The chain is Glycerol kinase from Saccharolobus islandicus (strain M.16.27) (Sulfolobus islandicus).